A 407-amino-acid polypeptide reads, in one-letter code: (R)-phenyllactyl-CoA dehydratase alpha subunit (407 aa).

The propeptide occupies 1-4 (MSDR).

It belongs to the FldB/FldC dehydratase alpha/beta subunit family. In terms of assembly, part of the heterotrimeric phenyllactate dehydratase complex FldABC, composed of (R)-phenyllactate CoA-transferase (FldA) and a heterodimeric (R)-phenyllactyl-CoA dehydratase (FldB and FldC). The cofactor is [4Fe-4S] cluster. No flavin could be detected in the FldABC complex, and the addition of FAD, FMN or riboflavin to the dehydratase do not increase enzymatic activity. serves as cofactor.

It catalyses the reaction (R)-3-phenyllactoyl-CoA = (E)-cinnamoyl-CoA + H2O. The catalysed reaction is (R)-3-(4-hydroxyphenyl)lactoyl-CoA = (E)-4-coumaroyl-CoA + H2O. The enzyme catalyses (R)-3-(indol-3-yl)lactoyl-CoA = (E)-3-(indol-3-yl)acryloyl-CoA + H2O. Its pathway is amino-acid degradation; L-phenylalanine degradation. Component of the phenyllactate dehydratase complex FldABC that is involved in the fermentation of L-phenylalanine via a Stickland reaction. This complex catalyzes the reversible syn-dehydration of (R)-phenyllactate to (E)-cinnamate in two steps, a CoA-transfer from cinnamoyl-CoA to phenyllactate, catalyzed by FldA, followed by the dehydration of phenyllactyl-CoA to cinnamoyl-CoA, catalyzed by FldB and FldC. Requires the activator FldI to initiate catalysis. The protein is (R)-phenyllactyl-CoA dehydratase alpha subunit of Clostridium sporogenes.